A 722-amino-acid polypeptide reads, in one-letter code: Polymerase basic protein 2 (722 aa).

As to quaternary structure, the RNA polymerase is composed of three subunits: PB1, PB2 and PA.

The protein localises to the virion. The protein resides in the host nucleus. Its function is as follows. Involved in transcription initiation and cap-stealing mechanism, in which cellular capped pre-mRNA are used to generate primers for viral transcription. Binds the cap of the target pre-RNA which is subsequently cleaved by PB1. May play a role in genome replication. This Gadus morhua (Atlantic cod) protein is Polymerase basic protein 2.